A 40-amino-acid chain; its full sequence is uncharacterized protein (40 aa).

This is an uncharacterized protein from Sulfolobus acidocaldarius (strain ATCC 33909 / DSM 639 / JCM 8929 / NBRC 15157 / NCIMB 11770).